A 715-amino-acid chain; its full sequence is Polyribonucleotide nucleotidyltransferase (715 aa).

2 residues coordinate Mg(2+): Asp-491 and Asp-497. Positions 558 to 617 (PKIMTMTINPEKIRDVIGPQGRVINKIIEETGVKIDIEQDGRVFIASINHEANLRAKQII) constitute a KH domain. The S1 motif domain occupies 627 to 695 (GQVYLGTVKR…DQGRVNLSRK (69 aa)).

It belongs to the polyribonucleotide nucleotidyltransferase family. Mg(2+) serves as cofactor.

Its subcellular location is the cytoplasm. It carries out the reaction RNA(n+1) + phosphate = RNA(n) + a ribonucleoside 5'-diphosphate. Involved in mRNA degradation. Catalyzes the phosphorolysis of single-stranded polyribonucleotides processively in the 3'- to 5'-direction. This chain is Polyribonucleotide nucleotidyltransferase, found in Brevibacillus brevis (strain 47 / JCM 6285 / NBRC 100599).